The sequence spans 878 residues: E3 ubiquitin-protein ligase SH3RF3 (878 aa).

Residues 19-40 (RGEGEDRQGEQQRGAQARTEED) form a disordered region. Residues 52–93 (CSVCLERLDTTAKVLPCQHTFCRRCLESIVCSRHELRCPECR) form an RING-type zinc finger. The tract at residues 120-145 (PRTGASPGSSPPARPGPGTFSALAGG) is disordered. SH3 domains are found at residues 187–246 (SQLP…CVRP) and 249–312 (QALP…LNDS). The interaction with RAC1 stretch occupies residues 364 to 433 (RVDSKKNAKK…TVPTQDSSSA (70 aa)). Phosphoserine is present on Ser-395. Positions 458 to 519 (LPLNVYLALY…PGNYVTPVSR (62 aa)) constitute an SH3 3 domain. Disordered stretches follow at residues 574-659 (QHPA…CPRP) and 688-758 (PISG…MGPE). Composition is skewed to polar residues over residues 590–609 (AQPT…THAS), 618–633 (ATVS…SRLP), 643–653 (ASPQHGQQSPA), and 690–699 (SGLSTPSLIN). Residues 703-716 (KPDDKKNEKKEKKS) show a composition bias toward basic and acidic residues. Residues 741–752 (HDPQSAMDTSLQ) show a composition bias toward polar residues. Ser-792 bears the Phosphoserine mark. One can recognise an SH3 4 domain in the interval 819-878 (LPRERYRVVVSYPPQSEAEIELKEGDIVFVHKKHEDGWFKGTLQRNGRTGLFPGSFVESF).

The protein belongs to the SH3RF family. As to quaternary structure, interacts (via SH3 domain 3) with PAK2. Interacts with RAC1 (GTP-bound form). In terms of processing, autoubiquitinated.

It catalyses the reaction S-ubiquitinyl-[E2 ubiquitin-conjugating enzyme]-L-cysteine + [acceptor protein]-L-lysine = [E2 ubiquitin-conjugating enzyme]-L-cysteine + N(6)-ubiquitinyl-[acceptor protein]-L-lysine.. It functions in the pathway protein modification; protein ubiquitination. Functionally, has E3 ubiquitin-protein ligase activity. The chain is E3 ubiquitin-protein ligase SH3RF3 (Sh3rf3) from Mus musculus (Mouse).